Here is a 507-residue protein sequence, read N- to C-terminus: ESX-5 secretion system ATPase EccB5 (507 aa).

The chain crosses the membrane as a helical span at residues 56 to 76 (VVASVSAALVICLGSLLWSFI).

Belongs to the EccB family. Part of the ESX-5 / type VII secretion system (T7SS), which is composed of cytosolic and membrane components. The ESX-5 membrane complex is composed of EccB5, EccC5, EccD5 and EccE5.

The protein localises to the cell inner membrane. An ATPase. Part of the ESX-5 specialized secretion system, which is responsible for the secretion of EsxN and a number of PE_PGRS and PPE proteins. This chain is ESX-5 secretion system ATPase EccB5, found in Mycobacterium marinum (strain ATCC BAA-535 / M).